Reading from the N-terminus, the 343-residue chain is Transcription factor MYB83 (343 aa).

Residues 1–16 show a composition bias toward basic and acidic residues; that stretch reads MMMRKPDITTIRDKGK. The tract at residues 1-33 is disordered; it reads MMMRKPDITTIRDKGKPNHACGGNNNKPKLRKG. HTH myb-type domains lie at 27-79 and 80-134; these read KPKL…INYL and RPDL…KKRL. DNA-binding regions (H-T-H motif) lie at residues 55 to 79 and 107 to 130; these read WSDI…INYL and WSQI…NSTL. Positions 134–172 are disordered; sequence LKNNSNNNTSSGSSPNNSNSNSLDPRDQHVDMGGNSTSL. Residues 136–155 are compositionally biased toward low complexity; that stretch reads NNSNNNTSSGSSPNNSNSNS.

In terms of tissue distribution, expressed specifically in fiber and vessel cells that are undergoing secondary wall thickening in floral stems. Expressed in vessels but not in xylary fibers in the developing secondary xylem of roots.

It localises to the nucleus. Transcription factor that acts as a molecular switch in the NAC012/SND1-mediated transcriptional network regulating secondary wall biosynthesis. Is directly activated by NAC012/SND1 and its close homologs, including NAC043/NST1, NAC066/NST2, NAC101/VND6 and NAC030/VND7. Is required for functional expression of a number of secondary wall-associated transcription factors and secondary wall biosynthetic genes involved in cellulose, xylan and lignin synthesis. Functions redundantly with MYB46 in the transcriptional regulatory cascade leading to secondary wall formation in fibers and vessels. Transcription activator that binds to the DNA consensus sequence 5'-ACC[AT]A[AC][TC]-3', designated as the secondary wall MYB-responsive element (SMRE). Regulates directly numerous transcription factors and a number of genes involved in secondary wall biosynthesis that contain SMRE elements in their promoters. In Arabidopsis thaliana (Mouse-ear cress), this protein is Transcription factor MYB83.